The following is a 132-amino-acid chain: Ribosome-binding factor A (132 aa).

The disordered stretch occupies residues 113–132 (EANSTRAKDDDEADAPAKDD).

Belongs to the RbfA family. As to quaternary structure, monomer. Binds 30S ribosomal subunits, but not 50S ribosomal subunits or 70S ribosomes.

The protein resides in the cytoplasm. In terms of biological role, one of several proteins that assist in the late maturation steps of the functional core of the 30S ribosomal subunit. Associates with free 30S ribosomal subunits (but not with 30S subunits that are part of 70S ribosomes or polysomes). Required for efficient processing of 16S rRNA. May interact with the 5'-terminal helix region of 16S rRNA. This chain is Ribosome-binding factor A, found in Burkholderia ambifaria (strain MC40-6).